Here is a 715-residue protein sequence, read N- to C-terminus: Methionine--tRNA ligase (715 aa).

Positions 20-30 (PYANGKAHIGH) match the 'HIGH' region motif. Residues Cys-151, Cys-154, Cys-163, and Cys-167 each coordinate Zn(2+). Residues 334-338 (KFSKT) carry the 'KMSKS' region motif. Lys-337 provides a ligand contact to ATP. The tract at residues 559-593 (ANAKRNGVKGGEKEPSKSEGMGPSEASKASEKTVD) is disordered. The region spanning 613–715 (DFAKLDIRVG…KEIKSGSRIR (103 aa)) is the tRNA-binding domain.

This sequence belongs to the class-I aminoacyl-tRNA synthetase family. MetG type 1 subfamily. In terms of assembly, homodimer. Zn(2+) is required as a cofactor.

The protein localises to the cytoplasm. The enzyme catalyses tRNA(Met) + L-methionine + ATP = L-methionyl-tRNA(Met) + AMP + diphosphate. In terms of biological role, is required not only for elongation of protein synthesis but also for the initiation of all mRNA translation through initiator tRNA(fMet) aminoacylation. The polypeptide is Methionine--tRNA ligase (Methanosarcina mazei (strain ATCC BAA-159 / DSM 3647 / Goe1 / Go1 / JCM 11833 / OCM 88) (Methanosarcina frisia)).